A 215-amino-acid polypeptide reads, in one-letter code: Proteasome subunit beta type-1 (215 aa).

Residue Met-1 is modified to N-acetylmethionine. Positions 1–19 are cleaved as a propeptide — removed in mature form; the sequence is MNGIQVDINRLKKGEVSLG. Thr-20 serves as the catalytic Nucleophile.

This sequence belongs to the peptidase T1B family. In terms of assembly, the 26S proteasome consists of a 20S proteasome core and two 19S regulatory subunits. The 20S proteasome core is composed of 28 subunits that are arranged in four stacked rings, resulting in a barrel-shaped structure. The two end rings are each formed by seven alpha subunits, and the two central rings are each formed by seven beta subunits. The catalytic chamber with the active sites is on the inside of the barrel.

The protein localises to the cytoplasm. The protein resides in the nucleus. It carries out the reaction Cleavage of peptide bonds with very broad specificity.. The proteasome degrades poly-ubiquitinated proteins in the cytoplasm and in the nucleus. It is essential for the regulated turnover of proteins and for the removal of misfolded proteins. The proteasome is a multicatalytic proteinase complex that is characterized by its ability to cleave peptides with Arg, Phe, Tyr, Leu, and Glu adjacent to the leaving group at neutral or slightly basic pH. It has an ATP-dependent proteolytic activity. PRE3 and PRE4 are necessary for the peptidyl-glutamyl-peptide-hydrolyzing activity. Its function is as follows. This subunit is necessary for the peptidylglutamyl-peptide hydrolyzing activity. This Saccharomyces cerevisiae (strain ATCC 204508 / S288c) (Baker's yeast) protein is Proteasome subunit beta type-1 (PRE3).